We begin with the raw amino-acid sequence, 609 residues long: Putative 4-coumarate--CoA ligase-like 8 (609 aa).

The ATP site is built by S194, S195, G196, T197, T198, and K202. F252 and S256 together coordinate (E)-4-coumaroyl-AMP. Position 274 (R274) interacts with CoA. The segment at 276-348 (SVEKTMAAVE…SCFPAVNLGQ (73 aa)) is SBD1. The (E)-4-coumaroyl-AMP site is built by G326, Q348, T353, and M361. The ATP site is built by Q348 and T353. Residues 349–450 (CYGLTETTGI…VRGPSTMRGY (102 aa)) are SBD2. 2 residues coordinate ATP: D482 and R497. Residues K499 and K503 each coordinate (E)-4-coumaroyl-AMP. A506 lines the CoA pocket. K589 contacts ATP.

Belongs to the ATP-dependent AMP-binding enzyme family. Requires Mg(2+) as cofactor.

It carries out the reaction (E)-4-coumarate + ATP + CoA = (E)-4-coumaroyl-CoA + AMP + diphosphate. It catalyses the reaction (E)-4-coumarate + ATP + H(+) = (E)-4-coumaroyl-AMP + diphosphate. The catalysed reaction is (E)-4-coumaroyl-AMP + CoA = (E)-4-coumaroyl-CoA + AMP + H(+). Its function is as follows. Carboxylate--CoA ligase that may use 4-coumarate as substrate. Follows a two-step reaction mechanism, wherein the carboxylate substrate first undergoes adenylation by ATP, followed by a thioesterification in the presence of CoA to yield the final CoA thioester. The protein is Putative 4-coumarate--CoA ligase-like 8 (4CLL8) of Oryza sativa subsp. japonica (Rice).